The sequence spans 1087 residues: Exportin-7-B (1087 aa).

Residues 30–96 (AEKALVEFTN…RNYVLTYLAT (67 aa)) enclose the Importin N-terminal domain.

This sequence belongs to the exportin family.

The protein resides in the cytoplasm. The protein localises to the nucleus. Functionally, mediates the nuclear export of proteins (cargos) with broad substrate specificity. The sequence is that of Exportin-7-B (xpo7-b) from Xenopus laevis (African clawed frog).